The chain runs to 615 residues: TANK-binding kinase 1-binding protein 1 (615 aa).

Residues 1 to 279 (MESMFEDDIS…QDLASNQSER (279 aa)) are homodimerization. The stretch at 48–162 (YGDIKERLGG…ALVETHLRQI (115 aa)) forms a coiled coil. Serine 184 is subject to Phosphoserine. The stretch at 221–276 (VSDLERRRLEEALEAAQGEARGAQLREEQLQAECERLQGELKQLQETRAQDLASNQ) forms a coiled coil. The tract at residues 280–329 (DMAWVKRVGDDQVNLALAYTELTEELGRLRELSSLQGRILRTLLQEQARS) is interaction with TBK1 and IKBKE. The tract at residues 326 to 458 (QARSGGQRHS…SHHVKAGFQG (133 aa)) is disordered. Residues 345-365 (PQCPSPSPPARAAPPCPPCQS) show a composition bias toward pro residues. Residues serine 365, serine 372, serine 379, serine 385, serine 400, and serine 415 each carry the phosphoserine modification. A compositionally biased stretch (pro residues) spans 389–406 (PSCPSPVPQRRSPVPPSC). Positions 416–435 (PVPPSCPAPQPRPPPPPPPG) are enriched in pro residues. Serine 504 and serine 534 each carry phosphoserine. A UBZ1-type zinc finger spans residues 583–609 (IRSCPLCQLGFPVGYPDDALIKHIDSH). Residues cysteine 586, cysteine 589, histidine 605, and histidine 609 each coordinate Zn(2+).

In terms of assembly, homodimer. May form a heterodimer with NAP1. Interacts with TKB1 and IKBKE. Weakly interacts with DDX3X. (Microbial infection) Interacts with vaccinia virus protein C6. Detected in leukocytes, lung, placenta, small intestine, liver, kidney, spleen, muscle, heart, brain and at low levels in thymus.

Adapter protein which constitutively binds TBK1 and IKBKE playing a role in antiviral innate immunity. This chain is TANK-binding kinase 1-binding protein 1, found in Homo sapiens (Human).